The primary structure comprises 274 residues: Formamidopyrimidine-DNA glycosylase (274 aa).

The active-site Schiff-base intermediate with DNA is the P2. E3 functions as the Proton donor in the catalytic mechanism. K58 serves as the catalytic Proton donor; for beta-elimination activity. Residues H91, R110, and K152 each contribute to the DNA site. An FPG-type zinc finger spans residues 237 to 271; sequence KVYGRKNLPCLVCENKIETVVIAGRHSAFCPHCQP. R261 serves as the catalytic Proton donor; for delta-elimination activity.

Belongs to the FPG family. As to quaternary structure, monomer. Requires Zn(2+) as cofactor.

It catalyses the reaction Hydrolysis of DNA containing ring-opened 7-methylguanine residues, releasing 2,6-diamino-4-hydroxy-5-(N-methyl)formamidopyrimidine.. The catalysed reaction is 2'-deoxyribonucleotide-(2'-deoxyribose 5'-phosphate)-2'-deoxyribonucleotide-DNA = a 3'-end 2'-deoxyribonucleotide-(2,3-dehydro-2,3-deoxyribose 5'-phosphate)-DNA + a 5'-end 5'-phospho-2'-deoxyribonucleoside-DNA + H(+). Involved in base excision repair of DNA damaged by oxidation or by mutagenic agents. Acts as a DNA glycosylase that recognizes and removes damaged bases. Has a preference for oxidized purines, such as 7,8-dihydro-8-oxoguanine (8-oxoG). Has AP (apurinic/apyrimidinic) lyase activity and introduces nicks in the DNA strand. Cleaves the DNA backbone by beta-delta elimination to generate a single-strand break at the site of the removed base with both 3'- and 5'-phosphates. This chain is Formamidopyrimidine-DNA glycosylase, found in Legionella pneumophila subsp. pneumophila (strain Philadelphia 1 / ATCC 33152 / DSM 7513).